The sequence spans 209 residues: N-(5'-phosphoribosyl)anthranilate isomerase (209 aa).

Belongs to the TrpF family.

It carries out the reaction N-(5-phospho-beta-D-ribosyl)anthranilate = 1-(2-carboxyphenylamino)-1-deoxy-D-ribulose 5-phosphate. It functions in the pathway amino-acid biosynthesis; L-tryptophan biosynthesis; L-tryptophan from chorismate: step 3/5. The polypeptide is N-(5'-phosphoribosyl)anthranilate isomerase (Staphylococcus carnosus (strain TM300)).